Consider the following 129-residue polypeptide: Small ribosomal subunit protein eS6 (129 aa).

It belongs to the eukaryotic ribosomal protein eS6 family.

In Methanocorpusculum labreanum (strain ATCC 43576 / DSM 4855 / Z), this protein is Small ribosomal subunit protein eS6.